A 340-amino-acid chain; its full sequence is Integral membrane protein SED5 (340 aa).

Over 1-319 (MNIKDRTSEF…KYFDRIKSNR (319 aa)) the chain is Cytoplasmic. Positions 31–51 (RLQEKESENFANNTTGNGKSV) are disordered. Residues 39-51 (NFANNTTGNGKSV) are compositionally biased toward polar residues. Positions 146 to 173 (LNTQMKNISGSFKDVLEERQRLEMANKD) form a coiled coil. Residues 180-231 (TDTGHAPADDQTQSNHAADLTTYNNSNPFMTSLLDESSEKNNNSSNQGELSF) form a disordered region. Residues 189 to 209 (DQTQSNHAADLTTYNNSNPFM) show a composition bias toward polar residues. The 63-residue stretch at 249–311 (NVYLQERNRA…SGAQRELLKY (63 aa)) folds into the t-SNARE coiled-coil homology domain. A helical; Anchor for type IV membrane protein transmembrane segment spans residues 320–340 (WLAAKVFFIIFVFFVIWVLVN).

This sequence belongs to the syntaxin family. As to quaternary structure, interacts with SLY1, STF1, SFB3 and GOS1.

The protein resides in the membrane. Its subcellular location is the golgi apparatus membrane. Its function is as follows. Required for vesicular transport between the endoplasmic reticulum and the Golgi complex. Acts as a target organelle soluble NSF attachment protein receptor (t-SNARE). The sequence is that of Integral membrane protein SED5 (SED5) from Saccharomyces cerevisiae (strain ATCC 204508 / S288c) (Baker's yeast).